Here is a 409-residue protein sequence, read N- to C-terminus: Phosphatidylserine decarboxylase proenzyme, mitochondrial (409 aa).

The N-terminal 52 residues, 1–52, are a transit peptide targeting the mitochondrion; sequence MATSVGHRCLGLLHGVAPWRSSLHPCEITALSQSLQPLRKLPFRAFRTDARK. The tract at residues 36 to 103 is necessary for localization to both lipid droplets and mitochondria; it reads QPLRKLPFRA…LGLEIPPKLA (68 aa). Over 53–63 the chain is Mitochondrial matrix; it reads IHTAPARTMFL. Residues 64–82 traverse the membrane as a helical segment; the sequence is LRPLPILLVTGGGYAGYRQ. At 83-409 the chain is on the mitochondrial intermembrane side; sequence YEKYRERELE…IRFGEALGSL (327 aa). Active-site charge relay system; for autoendoproteolytic cleavage activity residues include D191, H267, and S378. Catalysis depends on S378, which acts as the Schiff-base intermediate with substrate; via pyruvic acid; for decarboxylase activity. Residue S378 is modified to Pyruvic acid (Ser); by autocatalysis.

Belongs to the phosphatidylserine decarboxylase family. PSD-B subfamily. Eukaryotic type I sub-subfamily. Heterodimer of a large membrane-associated beta subunit and a small pyruvoyl-containing alpha subunit. It depends on pyruvate as a cofactor. Post-translationally, is synthesized initially as an inactive proenzyme. Formation of the active enzyme involves a self-maturation process in which the active site pyruvoyl group is generated from an internal serine residue via an autocatalytic post-translational modification. Two non-identical subunits are generated from the proenzyme in this reaction, and the pyruvate is formed at the N-terminus of the alpha chain, which is derived from the carboxyl end of the proenzyme. The autoendoproteolytic cleavage occurs by a canonical serine protease mechanism, in which the side chain hydroxyl group of the serine supplies its oxygen atom to form the C-terminus of the beta chain, while the remainder of the serine residue undergoes an oxidative deamination to produce ammonia and the pyruvoyl prosthetic group on the alpha chain. During this reaction, the Ser that is part of the protease active site of the proenzyme becomes the pyruvoyl prosthetic group, which constitutes an essential element of the active site of the mature decarboxylase.

Its subcellular location is the mitochondrion inner membrane. The protein resides in the cytoplasm. The protein localises to the lipid droplet. It carries out the reaction a 1,2-diacyl-sn-glycero-3-phospho-L-serine + H(+) = a 1,2-diacyl-sn-glycero-3-phosphoethanolamine + CO2. Its pathway is phospholipid metabolism; phosphatidylethanolamine biosynthesis. Catalyzes the formation of phosphatidylethanolamine (PtdEtn) from phosphatidylserine (PtdSer). Plays a central role in phospholipid metabolism and in the interorganelle trafficking of phosphatidylserine. May be involved in lipid droplet biogenesis at the endoplasmic reticulum membrane. The chain is Phosphatidylserine decarboxylase proenzyme, mitochondrial from Homo sapiens (Human).